We begin with the raw amino-acid sequence, 327 residues long: MPHLAELVAKAKAAVEDAQDVAALDLVRVEYLGKKGHLTLQMTSLRELPAEERPAAGAVINQAKQEVQEALNARKEKLESVVLNARLAAETIDVSLPGRRMENGGLHPVTRTIDRIETFFGELGFSVESGPEIEDDYHNFDALNIPAHHPARADHDTFWFDTTRLLRTQTSGVQIRTMKAQQPPIRIIVPGRVYRNDYDQTHTPMFHQMEGLIVDKDISFTNLKGTLHDFLRNFFEEDLQIRFRPSYFPFTEPSAEVDVMGKNGKWLEVLGCGMVHPNVLRNVGIDPEVYSGFAFGMGMERLTMLRYGVTDLRAFFENDLRFLKQFK.

Glutamate 252 is a binding site for Mg(2+).

This sequence belongs to the class-II aminoacyl-tRNA synthetase family. Phe-tRNA synthetase alpha subunit type 1 subfamily. Tetramer of two alpha and two beta subunits. Requires Mg(2+) as cofactor.

The protein resides in the cytoplasm. The catalysed reaction is tRNA(Phe) + L-phenylalanine + ATP = L-phenylalanyl-tRNA(Phe) + AMP + diphosphate + H(+). The protein is Phenylalanine--tRNA ligase alpha subunit of Yersinia enterocolitica serotype O:8 / biotype 1B (strain NCTC 13174 / 8081).